The primary structure comprises 256 residues: Deoxyribose-phosphate aldolase (256 aa).

Catalysis depends on D102, which acts as the Proton donor/acceptor. Catalysis depends on K165, which acts as the Schiff-base intermediate with acetaldehyde. The active-site Proton donor/acceptor is the K197.

Belongs to the DeoC/FbaB aldolase family. DeoC type 2 subfamily.

The protein localises to the cytoplasm. It catalyses the reaction 2-deoxy-D-ribose 5-phosphate = D-glyceraldehyde 3-phosphate + acetaldehyde. Its pathway is carbohydrate degradation; 2-deoxy-D-ribose 1-phosphate degradation; D-glyceraldehyde 3-phosphate and acetaldehyde from 2-deoxy-alpha-D-ribose 1-phosphate: step 2/2. Catalyzes a reversible aldol reaction between acetaldehyde and D-glyceraldehyde 3-phosphate to generate 2-deoxy-D-ribose 5-phosphate. This Shewanella oneidensis (strain ATCC 700550 / JCM 31522 / CIP 106686 / LMG 19005 / NCIMB 14063 / MR-1) protein is Deoxyribose-phosphate aldolase.